Here is a 150-residue protein sequence, read N- to C-terminus: Large ribosomal subunit protein uL11 (150 aa).

This sequence belongs to the universal ribosomal protein uL11 family. In terms of assembly, part of the ribosomal stalk of the 50S ribosomal subunit. Interacts with L10 and the large rRNA to form the base of the stalk. L10 forms an elongated spine to which L12 dimers bind in a sequential fashion forming a multimeric L10(L12)X complex. In terms of processing, one or more lysine residues are methylated.

Its function is as follows. Forms part of the ribosomal stalk which helps the ribosome interact with GTP-bound translation factors. This Cereibacter sphaeroides (strain KD131 / KCTC 12085) (Rhodobacter sphaeroides) protein is Large ribosomal subunit protein uL11.